Here is a 472-residue protein sequence, read N- to C-terminus: uncharacterized protein (472 aa).

A run of 6 helical transmembrane segments spans residues 4-24 (IIILLALGLLMFTAYRGFSVI), 27-47 (APICALFAVLLTDPSHVLPFF), 56-76 (AGFIKLYFPVFLLGAIFGKVV), 99-119 (ILAIVLMGAVLTYSGVSLFVV), 140-160 (LIPGTIALGAFTFTMDALPGT), and 176-196 (IYAAPWLGLMGAVIVLAAGML). Positions 209 to 229 (GEGYGGFDSQNAPAPESIESA) are disordered. Positions 220–229 (APAPESIESA) are enriched in low complexity. 5 helical membrane-spanning segments follow: residues 240 to 260 (ALAFVPLILVGAVNKYFTIYL), 286 to 306 (AAAIWSVEIALVIGIITTILF), 323 to 343 (IGGALLASMNTGAEYGFGGII), 372 to 392 (TALAGITGSASGGMGIALSAM), and 448 to 468 (IFAITLIKTAAVFAVIAIYSL).

Belongs to the CitM (TC 2.A.11) transporter family.

The protein resides in the cell membrane. This is an uncharacterized protein from Bacillus subtilis (strain 168).